The following is a 771-amino-acid chain: Topoisomerase 1-associated factor 2 (771 aa).

Disordered stretches follow at residues 48-69, 271-330, and 346-367; these read NSINNCSDPSPTSPSSQNSIQS, EGVV…ISFD, and SDMHIQYSNPSSGAHSPRKSSL. A compositionally biased stretch (low complexity) spans 51–69; the sequence is NNCSDPSPTSPSSQNSIQS. Positions 275 to 294 are enriched in polar residues; sequence TQGSDNNKENIPSSTQQQKN. Residues 295 to 307 are compositionally biased toward basic and acidic residues; sequence DGAKRAESKDLDL. Residues 346–359 are compositionally biased toward polar residues; the sequence is SDMHIQYSNPSSGA. Residue Ser397 is modified to Phosphoserine. At Thr405 the chain carries Phosphothreonine. A disordered region spans residues 633 to 771; it reads NSKDKVEATS…KYVESDEDDQ (139 aa). Polar residues predominate over residues 640–652; the sequence is ATSNSTAQEQEQV. Residues 690–709 are compositionally biased toward low complexity; sequence SHSSPSSSSSMSLESSLDSS.

It to yeast YJL076w. As to quaternary structure, interacts with HPR1.

Its subcellular location is the nucleus. The polypeptide is Topoisomerase 1-associated factor 2 (TOF2) (Saccharomyces cerevisiae (strain ATCC 204508 / S288c) (Baker's yeast)).